The chain runs to 290 residues: 4-hydroxybenzoate octaprenyltransferase (290 aa).

A run of 6 helical transmembrane segments spans residues 41–61 (WPLLAIFVLGTLLMRSAGCAM), 89–109 (WEAVAIAVVLAFISFLLIQPL), 133–153 (FFAIPQAYLGIAFGFGIPMAF), 158–178 (DTVPMLAWVMLIANIFWSVAY), 202–224 (FGRFDVAAVMLCYAATLGIYVWI), and 269–289 (WLGGVLFAGIAAHYLLAGTAG).

The protein belongs to the UbiA prenyltransferase family. The cofactor is Mg(2+).

The protein resides in the cell inner membrane. It carries out the reaction all-trans-octaprenyl diphosphate + 4-hydroxybenzoate = 4-hydroxy-3-(all-trans-octaprenyl)benzoate + diphosphate. It functions in the pathway cofactor biosynthesis; ubiquinone biosynthesis. In terms of biological role, catalyzes the prenylation of para-hydroxybenzoate (PHB) with an all-trans polyprenyl group. Mediates the second step in the final reaction sequence of ubiquinone-8 (UQ-8) biosynthesis, which is the condensation of the polyisoprenoid side chain with PHB, generating the first membrane-bound Q intermediate 3-octaprenyl-4-hydroxybenzoate. The polypeptide is 4-hydroxybenzoate octaprenyltransferase (Burkholderia ambifaria (strain ATCC BAA-244 / DSM 16087 / CCUG 44356 / LMG 19182 / AMMD) (Burkholderia cepacia (strain AMMD))).